A 612-amino-acid polypeptide reads, in one-letter code: Beta-mannosyltransferase 5 (612 aa).

Residues 1–12 (MVQKQYRFAPKS) are Cytoplasmic-facing. A helical transmembrane segment spans residues 13–33 (IFTFVFLCFVAIVVIISTSSL). The Extracellular segment spans residues 34–612 (VQVEESLDPI…YRAHLKRWQN (579 aa)). N-linked (GlcNAc...) asparagine glycosylation is found at asparagine 224, asparagine 230, and asparagine 480.

Belongs to the BMT family.

The protein localises to the membrane. In terms of biological role, beta-mannosyltransferase involved in cell wall biosynthesis. Required for beta-1,2-mannose transfer on phospholipomannan. In Candida albicans (strain SC5314 / ATCC MYA-2876) (Yeast), this protein is Beta-mannosyltransferase 5 (BMT5).